The sequence spans 53 residues: Rho GTPase-activating protein 6 (53 aa).

The protein resides in the cytoplasm. GTPase activator for the Rho-type GTPases by converting them to an inactive GDP-bound state. Could regulate the interactions of signaling molecules with the actin cytoskeleton. Promotes continuous elongation of cytoplasmic processes during cell motility and simultaneous retraction of the cell body changing the cell morphology. The protein is Rho GTPase-activating protein 6 (arhgap6) of Takifugu rubripes (Japanese pufferfish).